Here is a 484-residue protein sequence, read N- to C-terminus: Neuronal acetylcholine receptor subunit alpha-9 (484 aa).

Residues 1-27 (MKRNNLSSFYVSLWLLFTATMLQAVES) form the signal peptide. Topologically, residues 28–240 (AKGKYAQMLF…FTLILKRKSS (213 aa)) are extracellular. N-linked (GlcNAc...) asparagine glycosylation occurs at N59. An intrachain disulfide couples C157 to C171. N172 carries N-linked (GlcNAc...) asparagine glycosylation. Na(+) is bound by residues S193 and D195. A disulfide bond links C221 and C222. 3 helical membrane-spanning segments follow: residues 241–261 (FYIFNLLLPCILISFLAPLGF), 271–291 (VSLGVTVLLALTVFQLMVAEI), and 305–325 (YIATMTMITASTALTIIIMNV). At 326-462 (HHCGSEAKPV…WKKVAKVMDR (137 aa)) the chain is on the cytoplasmic side. Positions 364–395 (RREKEQEHRLEGGDMCRGGDGKSHLSSRNDDS) are disordered. Residues 463–483 (FFMWIFFIMVFFMSVLIIGKA) form a helical membrane-spanning segment.

This sequence belongs to the ligand-gated ion channel (TC 1.A.9) family. Acetylcholine receptor (TC 1.A.9.1) subfamily. Alpha-9/CHRNA9 sub-subfamily. In terms of assembly, forms homo- or heteropentameric channels in conjunction with CHRNA10. The native outer hair cell receptor is composed of CHRNA9:CHRNA10 heterooligomers. Found in the stoichiometric form (CHRNA9)2:(CHRNA10)3. As to expression, expressed in hair cells of the cochlea (at protein level). Expressed in hair cells of the cochlea.

The protein localises to the synaptic cell membrane. It is found in the cell membrane. It catalyses the reaction Ca(2+)(in) = Ca(2+)(out). The catalysed reaction is K(+)(in) = K(+)(out). The enzyme catalyses Na(+)(in) = Na(+)(out). It carries out the reaction Mg(2+)(in) = Mg(2+)(out). With respect to regulation, activated by a myriad of ligands such as acetylcholine. AChR activity is inhibited by the antagonist alpha-conotoxins RgIA and GeXXA, small disulfide-constrained peptides from cone snails. Its function is as follows. Component of neuronal acetylcholine receptors (nAChRs) that function as pentameric, ligand-gated cation channels with high calcium permeability among other activities. nAChRs are excitatory neurotrasnmitter receptors formed by a collection of nAChR subunits known to mediate synaptic transmission in the nervous system and the neuromuscular junction. Each nAchR subunit confers differential attributes to channel properties, including activation, deactivation and desensitization kinetics, pH sensitivity, cation permeability, and binding to allosteric modulators. Forms either homopentamers or heteropentamers with CHRNA10. Expressed in the inner ear, in sympathetic neurons and in other non-neuronal cells, such as skin keratinocytes and lymphocytes. The channel is permeable to a range of divalent cations including calcium, the influx of which may activate a potassium current which hyperpolarizes the cell membrane. The polypeptide is Neuronal acetylcholine receptor subunit alpha-9 (CHRNA9) (Gallus gallus (Chicken)).